Here is a 468-residue protein sequence, read N- to C-terminus: Probable Xaa-Pro aminopeptidase pepP (468 aa).

Positions 264, 275, 398, and 438 each coordinate Mn(2+).

Belongs to the peptidase M24B family. It depends on Mn(2+) as a cofactor.

It catalyses the reaction Release of any N-terminal amino acid, including proline, that is linked to proline, even from a dipeptide or tripeptide.. Functionally, catalyzes the removal of a penultimate prolyl residue from the N-termini of peptides. The polypeptide is Probable Xaa-Pro aminopeptidase pepP (pepP) (Talaromyces stipitatus (strain ATCC 10500 / CBS 375.48 / QM 6759 / NRRL 1006) (Penicillium stipitatum)).